Reading from the N-terminus, the 317-residue chain is Olfactory receptor 5K16 (317 aa).

Over 1–28 (MEKTNHSLTTQFILVGFSDHPDLKTPLF) the chain is Extracellular. Asn5 is a glycosylation site (N-linked (GlcNAc...) asparagine). A helical transmembrane segment spans residues 29 to 49 (LLFSVIYLVTMVGNLGLVAVI). Over 50-56 (YLEPRLH) the chain is Cytoplasmic. A helical membrane pass occupies residues 57–77 (TPMYIFLGNLALMDSCCSCAI). The Extracellular portion of the chain corresponds to 78-93 (TPKILENFFSVDRRIS). A helical membrane pass occupies residues 94–114 (LYECMAQFYFLCLAETADCFL). A disulfide bond links Cys97 and Cys189. Residues 115–144 (LAAMAYDRYVAICNPLQYHSMMSKKLSIQM) lie on the Cytoplasmic side of the membrane. A helical transmembrane segment spans residues 145 to 165 (SIGTFITSNLHSLIHVGCLLR). Over 166 to 198 (LTFCKSNRIDHFFCDILPLYRLSCTDPFINELM) the chain is Extracellular. The chain crosses the membrane as a helical span at residues 199–219 (IYIFSMPIQVFTITTVLVSYF). Residues 220–239 (CILLTIFKMKSKDGRGKAFS) are Cytoplasmic-facing. The helical transmembrane segment at 240-259 (TCASHFFSVSIFYVCLLMYI) threads the bilayer. Residues 260-268 (RPFDEGNKD) are Extracellular-facing. Residues 269–289 (IPVAVFYTIIIPLLNPFIYSL) traverse the membrane as a helical segment. Topologically, residues 290-317 (RNKEVVNAVKKVMKTHSIFKNASASMAR) are cytoplasmic.

It belongs to the G-protein coupled receptor 1 family.

The protein localises to the cell membrane. Potential odorant receptor. This chain is Olfactory receptor 5K16, found in Mus musculus (Mouse).